The sequence spans 75 residues: MKLLLFTALVLVVISLIEVEAENERACIPLEKECTKTPGNCCSGLKCDCYRRFEQGVAKGVQCWCIEKDVTYKGV.

An N-terminal signal peptide occupies residues 1–21; that stretch reads MKLLLFTALVLVVISLIEVEA. Residues 22–25 constitute a propeptide that is removed on maturation; that stretch reads ENER.

This sequence belongs to the neurotoxin 19 (CSTX) family. 06 (U6-Lctx) subfamily. Post-translationally, contains 4 disulfide bonds. In terms of tissue distribution, expressed by the venom gland.

The protein localises to the secreted. This chain is U6-lycotoxin-Ls1g, found in Lycosa singoriensis (Wolf spider).